The sequence spans 750 residues: GTP pyrophosphokinase rsh (750 aa).

Positions 45 to 144 constitute an HD domain; that stretch reads YFSHPLEVAA…VKLADRLHNM (100 aa). Residues 390 to 451 form the TGS domain; sequence DQVFCFTPKG…KNGDEVDIIR (62 aa). The segment at 587-613 is disordered; sequence AAKVDPAATTPKPGKRALPIRGTNPDL. Positions 676–750 constitute an ACT domain; the sequence is RISVSAINSP…SVSSAKRVNG (75 aa).

It belongs to the RelA/SpoT family.

It catalyses the reaction GTP + ATP = guanosine 3'-diphosphate 5'-triphosphate + AMP. In terms of biological role, functions as a (p)ppGpp synthase. In eubacteria ppGpp (guanosine 3'-diphosphate 5'-diphosphate) is a mediator of the stringent response that coordinates a variety of cellular activities in response to changes in nutritional abundance. Plays a role in adaptation of Brucella to its intracellular host environment. The polypeptide is GTP pyrophosphokinase rsh (rsh) (Brucella abortus (strain 2308)).